Reading from the N-terminus, the 402-residue chain is Multidrug resistance protein MdtH (402 aa).

11 helical membrane-spanning segments follow: residues 13–33, 34–54, 99–116, 139–159, 165–185, 214–234, 243–263, 277–297, 300–320, 340–360, and 368–388; these read YFLL…FPLI, SIRF…ALGL, PWVL…GTLF, LLMM…SWLL, LVCG…AWLL, VLTL…LPVM, AAVK…LYPL, LMAG…ASNL, LFTL…ARET, LGLA…FDAG, and LPWA…WWQF.

The protein belongs to the major facilitator superfamily. DHA1 family. MdtH (TC 2.A.1.2.21) subfamily.

Its subcellular location is the cell inner membrane. In Cronobacter sakazakii (strain ATCC BAA-894) (Enterobacter sakazakii), this protein is Multidrug resistance protein MdtH.